A 278-amino-acid chain; its full sequence is uncharacterized protein (278 aa).

The span at methionine 1–methionine 11 shows a compositional bias: basic and acidic residues. Disordered regions lie at residues methionine 1 to lysine 107 and lysine 206 to arginine 278. Residues lysine 62 to serine 94 are compositionally biased toward low complexity. Positions lysine 97–lysine 107 are enriched in basic and acidic residues. Residues serine 249 to lysine 260 show a composition bias toward polar residues. The segment covering lysine 264–arginine 278 has biased composition (low complexity).

This is an uncharacterized protein from Acanthamoeba polyphaga mimivirus (APMV).